A 555-amino-acid polypeptide reads, in one-letter code: Sulfite reductase [ferredoxin] (555 aa).

Residues 1-22 (MTTARPAKARNEGQWALGHREP) are disordered. Residues 69 to 161 (YTQREQGYDG…DVGLQTTEAC (93 aa)) constitute a cross-link (3'-(S-cysteinyl)-tyrosine (Tyr-Cys)). Residues Cys-417, Cys-423, Cys-463, and Cys-467 each contribute to the [4Fe-4S] cluster site. Cys-467 contributes to the siroheme binding site.

It belongs to the nitrite and sulfite reductase 4Fe-4S domain family. Monomer. Siroheme serves as cofactor. Requires [4Fe-4S] cluster as cofactor.

It carries out the reaction hydrogen sulfide + 6 oxidized [2Fe-2S]-[ferredoxin] + 3 H2O = sulfite + 6 reduced [2Fe-2S]-[ferredoxin] + 7 H(+). In terms of biological role, catalyzes the reduction of sulfite to sulfide, a step in the biosynthesis of sulfur-containing amino acids and cofactors. This Mycobacterium bovis (strain ATCC BAA-935 / AF2122/97) protein is Sulfite reductase [ferredoxin] (sir).